Reading from the N-terminus, the 126-residue chain is MIFGTGIDIVDITRFDRLVEEGNVRLFERLFTPHEMEYCAGKARSSQHYALRFAAKEAFLKACGLGLREGMTWHDVEVVNDTLGKPELKLHGKALKLATDLSLSRTFVSLSHDGAYAVALVVLERP.

Residues aspartate 8 and glutamate 57 each contribute to the Mg(2+) site.

The protein belongs to the P-Pant transferase superfamily. AcpS family. The cofactor is Mg(2+).

It localises to the cytoplasm. The enzyme catalyses apo-[ACP] + CoA = holo-[ACP] + adenosine 3',5'-bisphosphate + H(+). Transfers the 4'-phosphopantetheine moiety from coenzyme A to a Ser of acyl-carrier-protein. This is Holo-[acyl-carrier-protein] synthase from Geobacter sulfurreducens (strain ATCC 51573 / DSM 12127 / PCA).